A 183-amino-acid chain; its full sequence is Pyruvoyl-dependent arginine decarboxylase 2 (183 aa).

Serine 41 is subject to Pyruvic acid (Ser).

The protein belongs to the PdaD family. Pyruvate serves as cofactor.

It catalyses the reaction L-arginine + H(+) = agmatine + CO2. The sequence is that of Pyruvoyl-dependent arginine decarboxylase 2 (pdaD2) from Methanosarcina mazei (strain ATCC BAA-159 / DSM 3647 / Goe1 / Go1 / JCM 11833 / OCM 88) (Methanosarcina frisia).